Here is a 221-residue protein sequence, read N- to C-terminus: Urease accessory protein UreG (221 aa).

19 to 26 (GPVGSGKT) serves as a coordination point for GTP.

It belongs to the SIMIBI class G3E GTPase family. UreG subfamily. Homodimer. UreD, UreF and UreG form a complex that acts as a GTP-hydrolysis-dependent molecular chaperone, activating the urease apoprotein by helping to assemble the nickel containing metallocenter of UreC. The UreE protein probably delivers the nickel.

The protein resides in the cytoplasm. Functionally, facilitates the functional incorporation of the urease nickel metallocenter. This process requires GTP hydrolysis, probably effectuated by UreG. The protein is Urease accessory protein UreG of Yersinia enterocolitica serotype O:8 / biotype 1B (strain NCTC 13174 / 8081).